Reading from the N-terminus, the 157-residue chain is UPF0262 protein Avi_0642 (157 aa).

It belongs to the UPF0262 family.

This is UPF0262 protein Avi_0642 from Allorhizobium ampelinum (strain ATCC BAA-846 / DSM 112012 / S4) (Agrobacterium vitis (strain S4)).